Reading from the N-terminus, the 146-residue chain is UPF0178 protein BAMEG_1545 (146 aa).

It belongs to the UPF0178 family.

This is UPF0178 protein BAMEG_1545 from Bacillus anthracis (strain CDC 684 / NRRL 3495).